A 160-amino-acid polypeptide reads, in one-letter code: Cyanate hydratase (160 aa).

Active-site residues include R100, E103, and S126.

The protein belongs to the cyanase family.

It catalyses the reaction cyanate + hydrogencarbonate + 3 H(+) = NH4(+) + 2 CO2. Functionally, catalyzes the reaction of cyanate with bicarbonate to produce ammonia and carbon dioxide. The chain is Cyanate hydratase from Neosartorya fischeri (strain ATCC 1020 / DSM 3700 / CBS 544.65 / FGSC A1164 / JCM 1740 / NRRL 181 / WB 181) (Aspergillus fischerianus).